A 487-amino-acid polypeptide reads, in one-letter code: Ribosomal protein uS12 methylthiotransferase RimO (487 aa).

The MTTase N-terminal domain maps to 38–149; it reads PTVAFAHLGC…IVEVLEQVEA (112 aa). Positions 47, 83, 112, 187, 191, and 194 each coordinate [4Fe-4S] cluster. Positions 173-402 constitute a Radical SAM core domain; the sequence is TTSEAVAYLK…MEAQQAISAE (230 aa). The region spanning 405–476 is the TRAM domain; the sequence is GAWVGRIVDV…IYDLEGEVVG (72 aa).

It belongs to the methylthiotransferase family. RimO subfamily. It depends on [4Fe-4S] cluster as a cofactor.

Its subcellular location is the cytoplasm. It carries out the reaction L-aspartate(89)-[ribosomal protein uS12]-hydrogen + (sulfur carrier)-SH + AH2 + 2 S-adenosyl-L-methionine = 3-methylsulfanyl-L-aspartate(89)-[ribosomal protein uS12]-hydrogen + (sulfur carrier)-H + 5'-deoxyadenosine + L-methionine + A + S-adenosyl-L-homocysteine + 2 H(+). In terms of biological role, catalyzes the methylthiolation of an aspartic acid residue of ribosomal protein uS12. The sequence is that of Ribosomal protein uS12 methylthiotransferase RimO from Synechococcus sp. (strain RCC307).